A 468-amino-acid chain; its full sequence is Phosphomethylpyrimidine synthase (468 aa).

Residues asparagine 82, methionine 111, tyrosine 141, histidine 177, 197 to 199, 238 to 241, and glutamate 277 contribute to the substrate site; these read SRG and DSLR. Histidine 281 provides a ligand contact to Zn(2+). Position 304 (tyrosine 304) interacts with substrate. A Zn(2+)-binding site is contributed by histidine 345. Residues cysteine 425, cysteine 428, and cysteine 433 each coordinate [4Fe-4S] cluster.

It belongs to the ThiC family. It depends on [4Fe-4S] cluster as a cofactor.

It carries out the reaction 5-amino-1-(5-phospho-beta-D-ribosyl)imidazole + S-adenosyl-L-methionine = 4-amino-2-methyl-5-(phosphooxymethyl)pyrimidine + CO + 5'-deoxyadenosine + formate + L-methionine + 3 H(+). The protein operates within cofactor biosynthesis; thiamine diphosphate biosynthesis. Its function is as follows. Catalyzes the synthesis of the hydroxymethylpyrimidine phosphate (HMP-P) moiety of thiamine from aminoimidazole ribotide (AIR) in a radical S-adenosyl-L-methionine (SAM)-dependent reaction. The protein is Phosphomethylpyrimidine synthase of Prochlorococcus marinus (strain SARG / CCMP1375 / SS120).